The following is a 1755-amino-acid chain: Transposon Ty1-BL Gag-Pol polyprotein (1755 aa).

Polar residues-rich tracts occupy residues Ser-20–Asp-31, Val-46–Pro-55, and Val-137–His-168. 3 disordered regions span residues Ser-20–Pro-84, Val-137–Pro-173, and Gln-350–Ser-420. Residues Asn-299–His-401 form an RNA-binding region. The segment covering Ser-363–Arg-372 has biased composition (basic and acidic residues). Residues Thr-373–Gly-411 are compositionally biased toward polar residues. Asp-461 serves as the catalytic For protease activity; shared with dimeric partner. Residues Asn-583–Cys-640 are integrase-type zinc finger-like. The 176-residue stretch at Asn-660 to Pro-835 folds into the Integrase catalytic domain. The Mg(2+) site is built by Asp-671 and Asp-736. A disordered region spans residues Ser-956–Tyr-1172. Low complexity predominate over residues Ser-960–Thr-969. Composition is skewed to polar residues over residues Ser-1005 to Ser-1017 and Met-1031 to Ser-1043. A compositionally biased stretch (basic and acidic residues) spans Lys-1044–Ser-1053. 2 stretches are compositionally biased toward polar residues: residues Tyr-1054–Glu-1082 and Ser-1095–Leu-1106. A Bipartite nuclear localization signal motif is present at residues Lys-1178–Arg-1212. Residues Asn-1338 to Gln-1476 enclose the Reverse transcriptase Ty1/copia-type domain. Mg(2+) is bound by residues Asp-1346, Asp-1427, Asp-1428, Asp-1610, Glu-1652, and Asp-1685. The RNase H Ty1/copia-type domain occupies Asp-1610 to Lys-1752.

As to quaternary structure, the capsid protein forms a homotrimer, from which the VLPs are assembled. The protease is a homodimer, whose active site consists of two apposed aspartic acid residues. Initially, virus-like particles (VLPs) are composed of the structural unprocessed proteins Gag and Gag-Pol, and also contain the host initiator methionine tRNA (tRNA(i)-Met) which serves as a primer for minus-strand DNA synthesis, and a dimer of genomic Ty RNA. Processing of the polyproteins occurs within the particle and proceeds by an ordered pathway, called maturation. First, the protease (PR) is released by autocatalytic cleavage of the Gag-Pol polyprotein yielding capsid protein p45 and a Pol-p154 precursor protein. This cleavage is a prerequisite for subsequent processing of Pol-p154 at the remaining sites to release the mature structural and catalytic proteins. Maturation takes place prior to the RT reaction and is required to produce transposition-competent VLPs.

The protein resides in the cytoplasm. It is found in the nucleus. The catalysed reaction is DNA(n) + a 2'-deoxyribonucleoside 5'-triphosphate = DNA(n+1) + diphosphate. It catalyses the reaction Endonucleolytic cleavage to 5'-phosphomonoester.. In terms of biological role, capsid protein (CA) is the structural component of the virus-like particle (VLP), forming the shell that encapsulates the retrotransposons dimeric RNA genome. The particles are assembled from trimer-clustered units and there are holes in the capsid shells that allow for the diffusion of macromolecules. CA also has nucleocapsid-like chaperone activity, promoting primer tRNA(i)-Met annealing to the multipartite primer-binding site (PBS), dimerization of Ty1 RNA and initiation of reverse transcription. Its function is as follows. The aspartyl protease (PR) mediates the proteolytic cleavages of the Gag and Gag-Pol polyproteins after assembly of the VLP. Functionally, reverse transcriptase/ribonuclease H (RT) is a multifunctional enzyme that catalyzes the conversion of the retro-elements RNA genome into dsDNA within the VLP. The enzyme displays a DNA polymerase activity that can copy either DNA or RNA templates, and a ribonuclease H (RNase H) activity that cleaves the RNA strand of RNA-DNA heteroduplexes during plus-strand synthesis and hydrolyzes RNA primers. The conversion leads to a linear dsDNA copy of the retrotransposon that includes long terminal repeats (LTRs) at both ends. Integrase (IN) targets the VLP to the nucleus, where a subparticle preintegration complex (PIC) containing at least integrase and the newly synthesized dsDNA copy of the retrotransposon must transit the nuclear membrane. Once in the nucleus, integrase performs the integration of the dsDNA into the host genome. The chain is Transposon Ty1-BL Gag-Pol polyprotein (TY1B-BL) from Saccharomyces cerevisiae (strain ATCC 204508 / S288c) (Baker's yeast).